Consider the following 157-residue polypeptide: MMLPDWKIEKEILIEPFSKESLQPAGYDLRVGKEAYVEGKLIDVEEAGNVIIPPKKHALILTLERVKLPDDVMGDMKIRSSLAREGILGSFAWVDPGWDGNLTLMLFNASNEPVVLEYGERFVQIAFIRLEEPAKRPYRGNYQGSRRIALSKRRVRK.

DCTP is bound by residues R79–R84, D95, Q124, and Y138.

The protein belongs to the dCTP deaminase family. In terms of assembly, homotrimer.

It catalyses the reaction dCTP + H2O + H(+) = dUTP + NH4(+). The protein operates within pyrimidine metabolism; dUMP biosynthesis; dUMP from dCTP (dUTP route): step 1/2. Catalyzes the deamination of dCTP to dUTP. The chain is dCTP deaminase from Thermococcus gammatolerans (strain DSM 15229 / JCM 11827 / EJ3).